We begin with the raw amino-acid sequence, 359 residues long: Peptide chain release factor 1 (359 aa).

At Gln235 the chain carries N5-methylglutamine. Residues 280–306 form a disordered region; it reads AERQRADSERSADRKSQVGSGDRSERI.

Belongs to the prokaryotic/mitochondrial release factor family. Methylated by PrmC. Methylation increases the termination efficiency of RF1.

Its subcellular location is the cytoplasm. In terms of biological role, peptide chain release factor 1 directs the termination of translation in response to the peptide chain termination codons UAG and UAA. This Rhizobium leguminosarum bv. trifolii (strain WSM2304) protein is Peptide chain release factor 1.